The primary structure comprises 249 residues: Electron transfer flavoprotein subunit beta (249 aa).

Belongs to the ETF beta-subunit/FixA family. As to quaternary structure, heterodimer of an alpha and a beta subunit. Requires FAD as cofactor. It depends on AMP as a cofactor.

Functionally, the electron transfer flavoprotein serves as a specific electron acceptor for other dehydrogenases. It transfers the electrons to the main respiratory chain via ETF-ubiquinone oxidoreductase (ETF dehydrogenase). The polypeptide is Electron transfer flavoprotein subunit beta (etfB) (Pseudomonas aeruginosa (strain ATCC 15692 / DSM 22644 / CIP 104116 / JCM 14847 / LMG 12228 / 1C / PRS 101 / PAO1)).